We begin with the raw amino-acid sequence, 221 residues long: Octanoyltransferase (221 aa).

Residues 29–208 (DEIPDTCLLL…RLTEFLLPAR (180 aa)) form the BPL/LPL catalytic domain. Substrate contacts are provided by residues 67–74 (RGGRITWH), 138–140 (AIG), and 151–153 (GFA). The active-site Acyl-thioester intermediate is the C169.

The protein belongs to the LipB family.

The protein localises to the cytoplasm. The catalysed reaction is octanoyl-[ACP] + L-lysyl-[protein] = N(6)-octanoyl-L-lysyl-[protein] + holo-[ACP] + H(+). It participates in protein modification; protein lipoylation via endogenous pathway; protein N(6)-(lipoyl)lysine from octanoyl-[acyl-carrier-protein]: step 1/2. Functionally, catalyzes the transfer of endogenously produced octanoic acid from octanoyl-acyl-carrier-protein onto the lipoyl domains of lipoate-dependent enzymes. Lipoyl-ACP can also act as a substrate although octanoyl-ACP is likely to be the physiological substrate. This chain is Octanoyltransferase, found in Acidothermus cellulolyticus (strain ATCC 43068 / DSM 8971 / 11B).